Consider the following 57-residue polypeptide: MSRLYAIILIALVLNVIMTIMPDSKVEAVSCEDCPEHCSTQKARAKCDNDKCVCESV.

The signal sequence occupies residues 1 to 28 (MSRLYAIILIALVLNVIMTIMPDSKVEA). Intrachain disulfides connect C31/C47, C34/C52, and C38/C54.

This sequence belongs to the short scorpion toxin superfamily. Potassium channel inhibitor family. Alpha-KTx 08 subfamily. Expressed by the venom gland.

Its subcellular location is the secreted. Functionally, selectively inhibits voltage-gated potassium channels Kv1.2/KCNA2 (IC(50)=183 nM). This is Potassium channel toxin alpha-KTx 8.5 from Odontobuthus doriae (Yellow Iranian scorpion).